A 259-amino-acid chain; its full sequence is Protein snail homolog Sna (259 aa).

Positions 1–20 are SNAG domain; sequence MPRSFLVKKHFSASKKPNYS. The tract at residues 71–113 is disordered; that stretch reads DYKKSPISPSSSDDSSKPLDLTSFSSEDEGGKTSDPPSPASSA. C2H2-type zinc fingers lie at residues 119–141, 150–172, 176–198, 204–226, and 232–255; these read FQCN…KQLH, FSCK…IRSH, CVCK…IRTH, FSCT…LQTH, and YQCK…ETGC.

This sequence belongs to the snail C2H2-type zinc-finger protein family. As to quaternary structure, interacts (via SNAG domain) with limd1 (via LIM domains), wtip (via LIM domains) and ajuba (via LIM domains). Interacts with elp3; the interaction inhibits snai1 ubiquitination and promotes snai1 stability. Ubiquitinated. Maternal expression is nearly completely restricted to the vegetal hemisphere. Zygotic expression begins in the dorsal marginal zone just before gastrulation (stage 9), and is almost completely absent in the animal hemisphere. At mid-gastrula (stage 11-11.5), expression begins in the ectoderm in an arc surrounding the prospective neural plate. From stage 12, anterior expression is down-regulated, while levels are increased in the prospective neural crest.

The protein resides in the nucleus. Functionally, transcriptional repressor. Acts upstream of snai2/slug, zic5 and other neural crest markers in the specification of the neural crest and neural crest migration. Involved in embryonic mesoderm formation. The sequence is that of Protein snail homolog Sna (snai1) from Xenopus laevis (African clawed frog).